The chain runs to 364 residues: tRNA-specific 2-thiouridylase MnmA 1 (364 aa).

Residues 11–18 and phenylalanine 37 contribute to the ATP site; that span reads GMSGGTDS. Cysteine 96 acts as the Nucleophile in catalysis. Cysteines 96 and 193 form a disulfide. Glycine 120 serves as a coordination point for ATP. The interval 142–144 is interaction with tRNA; sequence KDQ. The active-site Cysteine persulfide intermediate is the cysteine 193. Residues 309 to 310 are interaction with tRNA; the sequence is RY.

The protein belongs to the MnmA/TRMU family.

Its subcellular location is the cytoplasm. It carries out the reaction S-sulfanyl-L-cysteinyl-[protein] + uridine(34) in tRNA + AH2 + ATP = 2-thiouridine(34) in tRNA + L-cysteinyl-[protein] + A + AMP + diphosphate + H(+). Its function is as follows. Catalyzes the 2-thiolation of uridine at the wobble position (U34) of tRNA, leading to the formation of s(2)U34. This Bacteroides fragilis (strain ATCC 25285 / DSM 2151 / CCUG 4856 / JCM 11019 / LMG 10263 / NCTC 9343 / Onslow / VPI 2553 / EN-2) protein is tRNA-specific 2-thiouridylase MnmA 1.